Reading from the N-terminus, the 154-residue chain is SsrA-binding protein (154 aa).

Belongs to the SmpB family.

Its subcellular location is the cytoplasm. In terms of biological role, required for rescue of stalled ribosomes mediated by trans-translation. Binds to transfer-messenger RNA (tmRNA), required for stable association of tmRNA with ribosomes. tmRNA and SmpB together mimic tRNA shape, replacing the anticodon stem-loop with SmpB. tmRNA is encoded by the ssrA gene; the 2 termini fold to resemble tRNA(Ala) and it encodes a 'tag peptide', a short internal open reading frame. During trans-translation Ala-aminoacylated tmRNA acts like a tRNA, entering the A-site of stalled ribosomes, displacing the stalled mRNA. The ribosome then switches to translate the ORF on the tmRNA; the nascent peptide is terminated with the 'tag peptide' encoded by the tmRNA and targeted for degradation. The ribosome is freed to recommence translation, which seems to be the essential function of trans-translation. The sequence is that of SsrA-binding protein from Staphylococcus saprophyticus subsp. saprophyticus (strain ATCC 15305 / DSM 20229 / NCIMB 8711 / NCTC 7292 / S-41).